Reading from the N-terminus, the 653-residue chain is Macrolide export ATP-binding/permease protein MacB (653 aa).

Residues 6-244 (LQLTRVTRRF…DAAPDASGGA (239 aa)) enclose the ABC transporter domain. 42–49 (GASGSGKS) serves as a coordination point for ATP. 4 helical membrane-spanning segments follow: residues 278–298 (LLTM…VAIG), 526–546 (LTLL…IGVM), 587–607 (MGGA…SLFV), and 616–636 (AASI…FGFM).

This sequence belongs to the ABC transporter superfamily. Macrolide exporter (TC 3.A.1.122) family. As to quaternary structure, homodimer.

It localises to the cell inner membrane. Its function is as follows. Non-canonical ABC transporter that contains transmembrane domains (TMD), which form a pore in the inner membrane, and an ATP-binding domain (NBD), which is responsible for energy generation. Confers resistance against macrolides. This is Macrolide export ATP-binding/permease protein MacB from Burkholderia pseudomallei (strain 1710b).